The sequence spans 356 residues: Phosphate acyltransferase (356 aa).

It belongs to the PlsX family. Homodimer. Probably interacts with PlsY.

It localises to the cytoplasm. It carries out the reaction a fatty acyl-[ACP] + phosphate = an acyl phosphate + holo-[ACP]. Its pathway is lipid metabolism; phospholipid metabolism. Catalyzes the reversible formation of acyl-phosphate (acyl-PO(4)) from acyl-[acyl-carrier-protein] (acyl-ACP). This enzyme utilizes acyl-ACP as fatty acyl donor, but not acyl-CoA. This is Phosphate acyltransferase from Escherichia coli (strain 55989 / EAEC).